Consider the following 129-residue polypeptide: Protein FYV12 (129 aa).

A glycan (N-linked (GlcNAc...) asparagine) is linked at Asn91. Residues 109–128 form a helical membrane-spanning segment; that stretch reads LMTTFLLYVLYVCIYISAFI.

It localises to the membrane. In terms of biological role, involved in K1 killer toxin resistance. The sequence is that of Protein FYV12 (FYV12) from Saccharomyces cerevisiae (strain ATCC 204508 / S288c) (Baker's yeast).